The following is a 238-amino-acid chain: MKYLLPTAAAGLLLLAAQPAMAANTGGYATTDGGEVSGAVKKTARSMKEIVDIIEAAQVDSKGKKVKGGAYPLIITYSGNEDSLIKAAEKNICGQWSKDARGVQIKEFTKGTYYPGHQWLIRQLRCLDCETLLTLWYVICALAICQAARKHGDAIRIDNSPNVWIDHNEIFAKNFECKGTPDNDTTFESAVDIKKGSTNVTVSVSVKEVGTLVNLSRLFFPFRIQRYRAFRLPVSCLP.

The N-terminal stretch at 1 to 22 (MKYLLPTAAAGLLLLAAQPAMA) is a signal peptide. Positions 153, 188, and 192 each coordinate Ca(2+).

The protein belongs to the polysaccharide lyase 1 family. Ca(2+) is required as a cofactor.

The catalysed reaction is Eliminative cleavage of (1-&gt;4)-alpha-D-galacturonan to give oligosaccharides with 4-deoxy-alpha-D-galact-4-enuronosyl groups at their non-reducing ends.. Its pathway is glycan metabolism; pectin degradation; 2-dehydro-3-deoxy-D-gluconate from pectin: step 2/5. Involved in maceration and soft-rotting of plant tissue. This is Putative pectate lyase X (PEL X) from Pectobacterium carotovorum (Erwinia carotovora).